The primary structure comprises 560 residues: Diphtheria toxin homolog CRM228 (560 aa).

The first 25 residues, methionine 1 to alanine 25, serve as a signal peptide directing secretion. NAD(+)-binding residues include histidine 46 and tyrosine 90. The active site involves glutamate 173. Cystine bridges form between cysteine 211/cysteine 226 and cysteine 486/cysteine 496.

This chain is Diphtheria toxin homolog CRM228, found in Corynebacterium diphtheriae.